The following is a 370-amino-acid chain: 3-isopropylmalate dehydrogenase (370 aa).

Substrate-binding residues include R99, R109, R137, and D227. Mg(2+)-binding residues include D227, D251, and D255. G290–N302 provides a ligand contact to NAD(+).

It belongs to the isocitrate and isopropylmalate dehydrogenases family. LeuB type 1 subfamily. As to quaternary structure, homodimer. Mg(2+) is required as a cofactor. Requires Mn(2+) as cofactor.

Its subcellular location is the cytoplasm. The enzyme catalyses (2R,3S)-3-isopropylmalate + NAD(+) = 4-methyl-2-oxopentanoate + CO2 + NADH. It functions in the pathway amino-acid biosynthesis; L-leucine biosynthesis; L-leucine from 3-methyl-2-oxobutanoate: step 3/4. Catalyzes the oxidation of 3-carboxy-2-hydroxy-4-methylpentanoate (3-isopropylmalate) to 3-carboxy-4-methyl-2-oxopentanoate. The product decarboxylates to 4-methyl-2 oxopentanoate. In Rhodospirillum rubrum (strain ATCC 11170 / ATH 1.1.1 / DSM 467 / LMG 4362 / NCIMB 8255 / S1), this protein is 3-isopropylmalate dehydrogenase.